Reading from the N-terminus, the 262-residue chain is 26 kDa secreted antigen (262 aa).

A signal peptide spans 1-21; it reads MSVVHKACLIALLFVSSGVAQ. ShKT domains are found at residues 23–57 and 59–93; these read CMDS…CNTC and CRDE…CGLC. Cystine bridges form between Cys-23-Cys-57, Cys-30-Cys-50, Cys-37-Cys-54, Cys-59-Cys-93, Cys-66-Cys-86, and Cys-73-Cys-90.

It belongs to the phosphatidylethanolamine-binding protein family.

It localises to the secreted. Its function is as follows. Binds phosphatidylethanolamine. The chain is 26 kDa secreted antigen (TES-26) from Toxocara canis (Canine roundworm).